A 256-amino-acid polypeptide reads, in one-letter code: Thiazole synthase (256 aa).

Lys96 (schiff-base intermediate with DXP) is an active-site residue. Residues Gly157, 183–184 (AG), and 205–206 (NT) each bind 1-deoxy-D-xylulose 5-phosphate.

The protein belongs to the ThiG family. In terms of assembly, homotetramer. Forms heterodimers with either ThiH or ThiS.

It localises to the cytoplasm. It catalyses the reaction [ThiS sulfur-carrier protein]-C-terminal-Gly-aminoethanethioate + 2-iminoacetate + 1-deoxy-D-xylulose 5-phosphate = [ThiS sulfur-carrier protein]-C-terminal Gly-Gly + 2-[(2R,5Z)-2-carboxy-4-methylthiazol-5(2H)-ylidene]ethyl phosphate + 2 H2O + H(+). Its pathway is cofactor biosynthesis; thiamine diphosphate biosynthesis. Functionally, catalyzes the rearrangement of 1-deoxy-D-xylulose 5-phosphate (DXP) to produce the thiazole phosphate moiety of thiamine. Sulfur is provided by the thiocarboxylate moiety of the carrier protein ThiS. In vitro, sulfur can be provided by H(2)S. The polypeptide is Thiazole synthase (Bacillus cytotoxicus (strain DSM 22905 / CIP 110041 / 391-98 / NVH 391-98)).